The primary structure comprises 177 residues: Large ribosomal subunit protein uL6 (177 aa).

Belongs to the universal ribosomal protein uL6 family. As to quaternary structure, part of the 50S ribosomal subunit.

Functionally, this protein binds to the 23S rRNA, and is important in its secondary structure. It is located near the subunit interface in the base of the L7/L12 stalk, and near the tRNA binding site of the peptidyltransferase center. The protein is Large ribosomal subunit protein uL6 of Shewanella denitrificans (strain OS217 / ATCC BAA-1090 / DSM 15013).